A 338-amino-acid polypeptide reads, in one-letter code: Anthranilate phosphoribosyltransferase (338 aa).

5-phospho-alpha-D-ribose 1-diphosphate is bound by residues G83, 86-87 (GD), S91, 93-96 (NCST), 111-119 (KHGNRAVSS), and A123. Anthranilate is bound at residue G83. Mg(2+) is bound at residue S95. N114 contacts anthranilate. R169 contacts anthranilate. The Mg(2+) site is built by D228 and E229.

The protein belongs to the anthranilate phosphoribosyltransferase family. As to quaternary structure, homodimer. Mg(2+) is required as a cofactor.

The catalysed reaction is N-(5-phospho-beta-D-ribosyl)anthranilate + diphosphate = 5-phospho-alpha-D-ribose 1-diphosphate + anthranilate. The protein operates within amino-acid biosynthesis; L-tryptophan biosynthesis; L-tryptophan from chorismate: step 2/5. In terms of biological role, catalyzes the transfer of the phosphoribosyl group of 5-phosphorylribose-1-pyrophosphate (PRPP) to anthranilate to yield N-(5'-phosphoribosyl)-anthranilate (PRA). In Nitratidesulfovibrio vulgaris (strain DSM 19637 / Miyazaki F) (Desulfovibrio vulgaris), this protein is Anthranilate phosphoribosyltransferase.